We begin with the raw amino-acid sequence, 216 residues long: Adenylate kinase (216 aa).

13 to 18 provides a ligand contact to ATP; the sequence is GAGKGT. An NMP region spans residues 33–66; the sequence is TTGDALRANKTKDITHLDVEYDTPGAYMDAGELV. AMP-binding positions include threonine 34, arginine 39, 64 to 66, 89 to 92, and glutamine 96; these read ELV and GYPR. The LID stretch occupies residues 125–162; it reads GRRVCEDCGATFHVSFNQPETEGVCDACGGSLYQREDD. An ATP-binding site is contributed by arginine 126. Residues cysteine 129 and cysteine 132 each coordinate Zn(2+). Position 135-136 (135-136) interacts with ATP; the sequence is TF. Residues cysteine 149 and cysteine 152 each coordinate Zn(2+). AMP-binding residues include arginine 159 and arginine 170. Arginine 198 is an ATP binding site.

It belongs to the adenylate kinase family. In terms of assembly, monomer.

It is found in the cytoplasm. The catalysed reaction is AMP + ATP = 2 ADP. Its pathway is purine metabolism; AMP biosynthesis via salvage pathway; AMP from ADP: step 1/1. In terms of biological role, catalyzes the reversible transfer of the terminal phosphate group between ATP and AMP. Plays an important role in cellular energy homeostasis and in adenine nucleotide metabolism. The chain is Adenylate kinase from Halobacterium salinarum (strain ATCC 700922 / JCM 11081 / NRC-1) (Halobacterium halobium).